The primary structure comprises 279 residues: 3-methyl-2-oxobutanoate hydroxymethyltransferase (279 aa).

Mg(2+) contacts are provided by aspartate 43 and aspartate 82. 3-methyl-2-oxobutanoate contacts are provided by residues 43–44 (DS), aspartate 82, and lysine 112. Glutamate 114 contributes to the Mg(2+) binding site. Glutamate 181 functions as the Proton acceptor in the catalytic mechanism.

The protein belongs to the PanB family. In terms of assembly, homodecamer; pentamer of dimers. It depends on Mg(2+) as a cofactor.

It is found in the cytoplasm. It catalyses the reaction 3-methyl-2-oxobutanoate + (6R)-5,10-methylene-5,6,7,8-tetrahydrofolate + H2O = 2-dehydropantoate + (6S)-5,6,7,8-tetrahydrofolate. It functions in the pathway cofactor biosynthesis; (R)-pantothenate biosynthesis; (R)-pantoate from 3-methyl-2-oxobutanoate: step 1/2. Its function is as follows. Catalyzes the reversible reaction in which hydroxymethyl group from 5,10-methylenetetrahydrofolate is transferred onto alpha-ketoisovalerate to form ketopantoate. The chain is 3-methyl-2-oxobutanoate hydroxymethyltransferase from Bacillus pumilus (strain SAFR-032).